A 123-amino-acid polypeptide reads, in one-letter code: DNA-directed RNA polymerase subunit omega (123 aa).

Residues 67–123 (EESAADSLSLGGFSTADVEAEVGGGPVQPDPGASQERAFDEAADGTAQGSGDPDPTT) form a disordered region.

The protein belongs to the RNA polymerase subunit omega family. In terms of assembly, the RNAP catalytic core consists of 2 alpha, 1 beta, 1 beta' and 1 omega subunit. When a sigma factor is associated with the core the holoenzyme is formed, which can initiate transcription.

The enzyme catalyses RNA(n) + a ribonucleoside 5'-triphosphate = RNA(n+1) + diphosphate. Functionally, promotes RNA polymerase assembly. Latches the N- and C-terminal regions of the beta' subunit thereby facilitating its interaction with the beta and alpha subunits. The chain is DNA-directed RNA polymerase subunit omega from Halorhodospira halophila (strain DSM 244 / SL1) (Ectothiorhodospira halophila (strain DSM 244 / SL1)).